The following is a 369-amino-acid chain: tRNA-specific 2-thiouridylase MnmA (369 aa).

Residues 7-14 and Met33 each bind ATP; that span reads GISGGVDS. An interaction with target base in tRNA region spans residues 93-95; that stretch reads NPD. Cys98 (nucleophile) is an active-site residue. Cys98 and Cys195 are joined by a disulfide. Gly123 contributes to the ATP binding site. Residues 145–147 form an interaction with tRNA region; it reads KDQ. Cys195 (cysteine persulfide intermediate) is an active-site residue. Residues 307 to 308 are interaction with tRNA; the sequence is RY.

It belongs to the MnmA/TRMU family. As to quaternary structure, interacts with TusE.

Its subcellular location is the cytoplasm. It carries out the reaction S-sulfanyl-L-cysteinyl-[protein] + uridine(34) in tRNA + AH2 + ATP = 2-thiouridine(34) in tRNA + L-cysteinyl-[protein] + A + AMP + diphosphate + H(+). Functionally, catalyzes the 2-thiolation of uridine at the wobble position (U34) of tRNA(Lys), tRNA(Glu) and tRNA(Gln), leading to the formation of s(2)U34, the first step of tRNA-mnm(5)s(2)U34 synthesis. Sulfur is provided by IscS, via a sulfur-relay system. Binds ATP and its substrate tRNAs. In Blochmanniella floridana, this protein is tRNA-specific 2-thiouridylase MnmA.